Here is a 64-residue protein sequence, read N- to C-terminus: MRCLPVFVILLLLIASAPSVDARPKTKDDIPLVSFQDNAKRALQILSNKRYCCYFDYSCCLYLR.

Residues 1 to 22 (MRCLPVFVILLLLIASAPSVDA) form the signal peptide. A propeptide spanning residues 23 to 48 (RPKTKDDIPLVSFQDNAKRALQILSN) is cleaved from the precursor.

Belongs to the conotoxin T superfamily. In terms of processing, contains 2 disulfide bonds that can be either 'C1-C3, C2-C4' or 'C1-C4, C2-C3', since these disulfide connectivities have been observed for conotoxins with cysteine framework V (for examples, see AC P0DQQ7 and AC P81755). Expressed by the venom duct.

Its subcellular location is the secreted. The protein is Conotoxin Pn-B01122 of Conus pennaceus (Feathered cone).